A 498-amino-acid chain; its full sequence is ATP synthase subunit beta, chloroplastic (498 aa).

Residue 172-179 (GGAGVGKT) coordinates ATP.

The protein belongs to the ATPase alpha/beta chains family. As to quaternary structure, F-type ATPases have 2 components, CF(1) - the catalytic core - and CF(0) - the membrane proton channel. CF(1) has five subunits: alpha(3), beta(3), gamma(1), delta(1), epsilon(1). CF(0) has four main subunits: a(1), b(1), b'(1) and c(9-12).

The protein localises to the plastid. Its subcellular location is the chloroplast thylakoid membrane. The catalysed reaction is ATP + H2O + 4 H(+)(in) = ADP + phosphate + 5 H(+)(out). Functionally, produces ATP from ADP in the presence of a proton gradient across the membrane. The catalytic sites are hosted primarily by the beta subunits. This Aspidistra elatior (Cast-iron plant) protein is ATP synthase subunit beta, chloroplastic.